The sequence spans 345 residues: N-acetyl-gamma-glutamyl-phosphate reductase (345 aa).

Cysteine 149 is an active-site residue.

The protein belongs to the NAGSA dehydrogenase family. Type 1 subfamily.

The protein resides in the cytoplasm. The enzyme catalyses N-acetyl-L-glutamate 5-semialdehyde + phosphate + NADP(+) = N-acetyl-L-glutamyl 5-phosphate + NADPH + H(+). It participates in amino-acid biosynthesis; L-arginine biosynthesis; N(2)-acetyl-L-ornithine from L-glutamate: step 3/4. Catalyzes the NADPH-dependent reduction of N-acetyl-5-glutamyl phosphate to yield N-acetyl-L-glutamate 5-semialdehyde. The chain is N-acetyl-gamma-glutamyl-phosphate reductase from Herminiimonas arsenicoxydans.